A 314-amino-acid polypeptide reads, in one-letter code: 4-hydroxy-3-methylbut-2-enyl diphosphate reductase (314 aa).

Cysteine 12 is a binding site for [4Fe-4S] cluster. Positions 41 and 74 each coordinate (2E)-4-hydroxy-3-methylbut-2-enyl diphosphate. Residues histidine 41 and histidine 74 each contribute to the dimethylallyl diphosphate site. Positions 41 and 74 each coordinate isopentenyl diphosphate. Residue cysteine 96 participates in [4Fe-4S] cluster binding. Residue histidine 124 participates in (2E)-4-hydroxy-3-methylbut-2-enyl diphosphate binding. Position 124 (histidine 124) interacts with dimethylallyl diphosphate. Residue histidine 124 coordinates isopentenyl diphosphate. Catalysis depends on glutamate 126, which acts as the Proton donor. Threonine 167 is a (2E)-4-hydroxy-3-methylbut-2-enyl diphosphate binding site. Cysteine 197 serves as a coordination point for [4Fe-4S] cluster. Residues serine 225, serine 226, asparagine 227, and serine 269 each contribute to the (2E)-4-hydroxy-3-methylbut-2-enyl diphosphate site. The dimethylallyl diphosphate site is built by serine 225, serine 226, asparagine 227, and serine 269. 4 residues coordinate isopentenyl diphosphate: serine 225, serine 226, asparagine 227, and serine 269.

Belongs to the IspH family. The cofactor is [4Fe-4S] cluster.

It catalyses the reaction isopentenyl diphosphate + 2 oxidized [2Fe-2S]-[ferredoxin] + H2O = (2E)-4-hydroxy-3-methylbut-2-enyl diphosphate + 2 reduced [2Fe-2S]-[ferredoxin] + 2 H(+). The catalysed reaction is dimethylallyl diphosphate + 2 oxidized [2Fe-2S]-[ferredoxin] + H2O = (2E)-4-hydroxy-3-methylbut-2-enyl diphosphate + 2 reduced [2Fe-2S]-[ferredoxin] + 2 H(+). Its pathway is isoprenoid biosynthesis; dimethylallyl diphosphate biosynthesis; dimethylallyl diphosphate from (2E)-4-hydroxy-3-methylbutenyl diphosphate: step 1/1. It functions in the pathway isoprenoid biosynthesis; isopentenyl diphosphate biosynthesis via DXP pathway; isopentenyl diphosphate from 1-deoxy-D-xylulose 5-phosphate: step 6/6. In terms of biological role, catalyzes the conversion of 1-hydroxy-2-methyl-2-(E)-butenyl 4-diphosphate (HMBPP) into a mixture of isopentenyl diphosphate (IPP) and dimethylallyl diphosphate (DMAPP). Acts in the terminal step of the DOXP/MEP pathway for isoprenoid precursor biosynthesis. The protein is 4-hydroxy-3-methylbut-2-enyl diphosphate reductase of Aliivibrio fischeri (strain MJ11) (Vibrio fischeri).